A 311-amino-acid chain; its full sequence is Probable cell division protein WhiA (311 aa).

A DNA-binding region (H-T-H motif) is located at residues 277-311 (TLKEVADQIPDGPISKSGVNHRFKKLHEIAESLRE).

The protein belongs to the WhiA family.

In terms of biological role, involved in cell division and chromosome segregation. The polypeptide is Probable cell division protein WhiA (Lactobacillus acidophilus (strain ATCC 700396 / NCK56 / N2 / NCFM)).